Here is a 391-residue protein sequence, read N- to C-terminus: Processive diacylglycerol beta-glucosyltransferase (391 aa).

This sequence belongs to the glycosyltransferase 28 family. UgtP subfamily.

It localises to the cell membrane. The enzyme catalyses a 1,2-diacyl-3-O-(beta-D-glucopyranosyl)-sn-glycerol + UDP-alpha-D-glucose = a 1,2-diacyl-3-O-(beta-D-Glc-(1-&gt;6)-beta-D-Glc)-sn-glycerol + UDP + H(+). It catalyses the reaction a 1,2-diacyl-sn-glycerol + UDP-alpha-D-glucose = a 1,2-diacyl-3-O-(beta-D-glucopyranosyl)-sn-glycerol + UDP + H(+). The protein operates within glycolipid metabolism; diglucosyl-diacylglycerol biosynthesis. Processive glucosyltransferase involved in the biosynthesis of both the bilayer- and non-bilayer-forming membrane glucolipids. Is able to successively transfer two glucosyl residues to diacylglycerol (DAG), thereby catalyzing the formation of beta-monoglucosyl-DAG (3-O-(beta-D-glucopyranosyl)-1,2-diacyl-sn-glycerol) and beta-diglucosyl-DAG (3-O-(beta-D-glucopyranosyl-beta-(1-&gt;6)-D-glucopyranosyl)-1,2-diacyl-sn-glycerol). Beta-diglucosyl-DAG is the predominant glycolipid found in Bacillales and is also used as a membrane anchor for lipoteichoic acid (LTA). This chain is Processive diacylglycerol beta-glucosyltransferase, found in Staphylococcus saprophyticus subsp. saprophyticus (strain ATCC 15305 / DSM 20229 / NCIMB 8711 / NCTC 7292 / S-41).